A 535-amino-acid chain; its full sequence is CTP synthase (535 aa).

Residues 1–267 (MTKYIFVTGG…DQIVCDHLKL (267 aa)) form an amidoligase domain region. Ser13 lines the CTP pocket. Ser13 contacts UTP. 14–19 (SLGKGI) is a binding site for ATP. Tyr54 is a binding site for L-glutamine. Asp71 contributes to the ATP binding site. Residues Asp71 and Glu141 each contribute to the Mg(2+) site. Residues 148–150 (DIE), 188–193 (KTKPTQ), and Lys224 contribute to the CTP site. Residues 188–193 (KTKPTQ) and Lys224 contribute to the UTP site. 240-242 (RDA) contacts ATP. Residues 292-534 (KIALVGKYVE…VKASLTNKES (243 aa)) form the Glutamine amidotransferase type-1 domain. Gly354 is a binding site for L-glutamine. Catalysis depends on Cys381, which acts as the Nucleophile; for glutamine hydrolysis. Residues 382-385 (LGMQ), Glu405, and Arg462 each bind L-glutamine. Residues His507 and Glu509 contribute to the active site.

It belongs to the CTP synthase family. As to quaternary structure, homotetramer.

The enzyme catalyses UTP + L-glutamine + ATP + H2O = CTP + L-glutamate + ADP + phosphate + 2 H(+). The catalysed reaction is L-glutamine + H2O = L-glutamate + NH4(+). It carries out the reaction UTP + NH4(+) + ATP = CTP + ADP + phosphate + 2 H(+). It participates in pyrimidine metabolism; CTP biosynthesis via de novo pathway; CTP from UDP: step 2/2. With respect to regulation, allosterically activated by GTP, when glutamine is the substrate; GTP has no effect on the reaction when ammonia is the substrate. The allosteric effector GTP functions by stabilizing the protein conformation that binds the tetrahedral intermediate(s) formed during glutamine hydrolysis. Inhibited by the product CTP, via allosteric rather than competitive inhibition. Catalyzes the ATP-dependent amination of UTP to CTP with either L-glutamine or ammonia as the source of nitrogen. Regulates intracellular CTP levels through interactions with the four ribonucleotide triphosphates. This Bacillus anthracis (strain A0248) protein is CTP synthase.